Here is a 1488-residue protein sequence, read N- to C-terminus: Chromosome partition protein MukB (1488 aa).

Residue 34–41 (GGNGAGKS) coordinates ATP. Coiled-coil stretches lie at residues 326 to 418 (LEAD…QYNQ), 444 to 472 (LDTF…QTAH), and 509 to 602 (RHLA…QRAP). Residues 666-783 (PGGAEDQRLN…SLPIFGRAAR (118 aa)) are flexible hinge. 3 coiled-coil regions span residues 835–923 (EAEI…AKLE), 977–1116 (EMLS…AKAG), and 1209–1265 (VEAI…LQSV). Residues 1049 to 1074 (ADSGAEERARQRRDELHAQLSNNRSR) form a disordered region. The segment covering 1051–1065 (SGAEERARQRRDELH) has biased composition (basic and acidic residues).

This sequence belongs to the SMC family. MukB subfamily. In terms of assembly, homodimerization via its hinge domain. Binds to DNA via its C-terminal region. Interacts, and probably forms a ternary complex, with MukE and MukF via its C-terminal region. The complex formation is stimulated by calcium or magnesium. Interacts with tubulin-related protein FtsZ.

It is found in the cytoplasm. The protein resides in the nucleoid. Its function is as follows. Plays a central role in chromosome condensation, segregation and cell cycle progression. Functions as a homodimer, which is essential for chromosome partition. Involved in negative DNA supercoiling in vivo, and by this means organize and compact chromosomes. May achieve or facilitate chromosome segregation by condensation DNA from both sides of a centrally located replisome during cell division. This Salmonella paratyphi A (strain ATCC 9150 / SARB42) protein is Chromosome partition protein MukB.